The chain runs to 761 residues: Phosphoribosylformylglycinamidine synthase subunit PurL (761 aa).

Over residues 1–13 (MTSRVDTVDNAAS) the composition is skewed to polar residues. The segment at 1–23 (MTSRVDTVDNAASTPDHPQPFAE) is disordered. Residue His57 is part of the active site. Residues Tyr60 and Lys104 each coordinate ATP. Glu106 is a Mg(2+) binding site. Substrate is bound by residues 107–110 (SHNH) and Arg129. The active-site Proton acceptor is His108. Asp130 serves as a coordination point for Mg(2+). Position 259 (Gln259) interacts with substrate. Asp287 is a Mg(2+) binding site. 331 to 333 (ESQ) is a substrate binding site. Asn519 and Gly556 together coordinate ATP. Asn557 contributes to the Mg(2+) binding site. A substrate-binding site is contributed by Ser559.

This sequence belongs to the FGAMS family. As to quaternary structure, monomer. Part of the FGAM synthase complex composed of 1 PurL, 1 PurQ and 2 PurS subunits.

It localises to the cytoplasm. It carries out the reaction N(2)-formyl-N(1)-(5-phospho-beta-D-ribosyl)glycinamide + L-glutamine + ATP + H2O = 2-formamido-N(1)-(5-O-phospho-beta-D-ribosyl)acetamidine + L-glutamate + ADP + phosphate + H(+). Its pathway is purine metabolism; IMP biosynthesis via de novo pathway; 5-amino-1-(5-phospho-D-ribosyl)imidazole from N(2)-formyl-N(1)-(5-phospho-D-ribosyl)glycinamide: step 1/2. Part of the phosphoribosylformylglycinamidine synthase complex involved in the purines biosynthetic pathway. Catalyzes the ATP-dependent conversion of formylglycinamide ribonucleotide (FGAR) and glutamine to yield formylglycinamidine ribonucleotide (FGAM) and glutamate. The FGAM synthase complex is composed of three subunits. PurQ produces an ammonia molecule by converting glutamine to glutamate. PurL transfers the ammonia molecule to FGAR to form FGAM in an ATP-dependent manner. PurS interacts with PurQ and PurL and is thought to assist in the transfer of the ammonia molecule from PurQ to PurL. In Mycobacteroides abscessus (strain ATCC 19977 / DSM 44196 / CCUG 20993 / CIP 104536 / JCM 13569 / NCTC 13031 / TMC 1543 / L948) (Mycobacterium abscessus), this protein is Phosphoribosylformylglycinamidine synthase subunit PurL.